The primary structure comprises 152 residues: Transcriptional regulator MraZ (152 aa).

SpoVT-AbrB domains lie at 5-52 and 81-124; these read ASAI…PLEA and AHEC…DEAA.

It belongs to the MraZ family. As to quaternary structure, forms oligomers.

It localises to the cytoplasm. The protein localises to the nucleoid. This is Transcriptional regulator MraZ from Shewanella loihica (strain ATCC BAA-1088 / PV-4).